The sequence spans 930 residues: MNKIRKFFRGSGRVLAFIFAASVIWLLFDMAALRLSFSEINAGLLKEDIIRREHTGFRVEPDQVKVLYTSIRGMGLPRNGAWGKENFRKAENHELKVEENMDQVQRKGKMQNLLGRRKAVPLWHLAHLQTLPVTIPMQKTQGRDSKPEVSSQYMMSKWMTVLESEKTPFTASRGVPLTKIAGRTETFDKKQEAPQNYNVSSDTSKQASERTLNMTISVKTDRSKQKSQTVTKLRMHFASPPILKSEEVTVIKKAEAQSKDLKHEALKALPLLKFIADMGHLKNQSTNETQLGRLPEDDAAKVAPGKKLNFSESHVVIITKEEELKTDTKEVPNSKTQTVFPKLLGGSPHKQIPRNQSKTSSSPPALKKAVSQSKPTISGGLHTARSNLTAKAPTVGYQQSHANIPENPGMHHVFRIDVTLSPRDLNAPGQFGRPVVVPPEKKKEAEQRWKEGNFNVYLSDLIPVDRAIEDTRPAGCAEQLVHNDLPTTSIIMCFVDEVWSALLRSVHSVLNRSPPHLIKEILLVDDFSTKEYLKADLDKYMSQFPKVRILRLKERHGLIRARLAGAQNATGDVLTFLDSHVECNVGWLEPLLERVYLNRKKVACPVIEVINDKDMSYMTVDNFQRGVFTWPMNFGWKTIPPDVVAKNGIKETDIIRCPVMAGGLFSIDKSYFYELGTYDPGLDVWGGENMELSFKVWMCGGEIEIIPCSRVGHIFRNDNPYSFPKDRMKTVERNLVRVAEVWLDDYRELFYGHGDHLIDQGLDVGNLTQQRELRKKLKCKSFKWYLDNVFPDLKAPVVRASGVLINMALGKCVSIENITVTLEDCDGSSQLQQFNYTWVRLIKHGEWCVAPIPEKGSLTLYHCDNRNNRLKWLHKSASAFHPELVDHIVFENYQQLLCMEGNFSQKTLKLAACNPMELQQKWKFEKYYEV.

The Cytoplasmic portion of the chain corresponds to 1 to 12 (MNKIRKFFRGSG). Residues 13 to 35 (RVLAFIFAASVIWLLFDMAALRL) form a helical; Signal-anchor for type II membrane protein membrane-spanning segment. Residues 36 to 930 (SFSEINAGLL…KWKFEKYYEV (895 aa)) lie on the Lumenal side of the membrane. The segment at 190 to 209 (KQEAPQNYNVSSDTSKQASE) is disordered. Over residues 193–209 (APQNYNVSSDTSKQASE) the composition is skewed to polar residues. Asn198, Asn213, and Asn283 each carry an N-linked (GlcNAc...) asparagine glycan. Ser285 is modified (phosphoserine). 4 N-linked (GlcNAc...) asparagine glycosylation sites follow: Asn287, Asn309, Asn355, and Asn387. The segment at 327–381 (DTKEVPNSKTQTVFPKLLGGSPHKQIPRNQSKTSSSPPALKKAVSQSKPTISGGL) is disordered. The segment covering 353–363 (PRNQSKTSSSP) has biased composition (polar residues). Disulfide bonds link Cys476-Cys708, Cys699-Cys779, and Cys812-Cys825. The interval 485–594 (LPTTSIIMCF…VGWLEPLLER (110 aa)) is catalytic subdomain A. Substrate contacts are provided by Asp526 and Arg555. Residue Asn568 is glycosylated (N-linked (GlcNAc...) asparagine). Asp578 is a binding site for Mn(2+). Residue Ser579 coordinates substrate. His580 is a Mn(2+) binding site. Positions 654-716 (IIRCPVMAGG…PCSRVGHIFR (63 aa)) are catalytic subdomain B. Trp685 is a substrate binding site. Residue His713 coordinates Mn(2+). 2 residues coordinate substrate: Arg716 and Tyr721. Residues Asn766, Asn817, and Asn835 are each glycosylated (N-linked (GlcNAc...) asparagine). The Ricin B-type lectin domain occupies 794 to 925 (KAPVVRASGV…MELQQKWKFE (132 aa)). 2 disulfides stabilise this stretch: Cys848-Cys863 and Cys898-Cys913. The N-linked (GlcNAc...) asparagine glycan is linked to Asn902.

Belongs to the glycosyltransferase 2 family. GalNAc-T subfamily. As to quaternary structure, interacts with EXT2. Does not interact with EXT1, EXTL1 or EXTL3. The cofactor is Mn(2+). In terms of tissue distribution, expressed at low level. Not expressed before E7.5 during embryogenesis. Expressed in dental mesenchyme and tongue. Accumulates in a subset of mesenchymal cells at the ventral-most portions of the 12.5 dpc maxilla and mandible underlying the dental lamina.

Its subcellular location is the golgi apparatus membrane. It carries out the reaction L-seryl-[protein] + UDP-N-acetyl-alpha-D-galactosamine = a 3-O-[N-acetyl-alpha-D-galactosaminyl]-L-seryl-[protein] + UDP + H(+). The enzyme catalyses L-threonyl-[protein] + UDP-N-acetyl-alpha-D-galactosamine = a 3-O-[N-acetyl-alpha-D-galactosaminyl]-L-threonyl-[protein] + UDP + H(+). It functions in the pathway protein modification; protein glycosylation. Catalyzes the initial reaction in O-linked oligosaccharide biosynthesis, the transfer of an N-acetyl-D-galactosamine residue to a serine or threonine residue on the protein receptor. Has activity toward EA2 peptide substrate, but has a weak activity toward Muc2 or Muc1b substrates. The sequence is that of Polypeptide N-acetylgalactosaminyltransferase 5 (Galnt5) from Mus musculus (Mouse).